Here is a 203-residue protein sequence, read N- to C-terminus: NADH-quinone oxidoreductase subunit C (203 aa).

This sequence belongs to the complex I 30 kDa subunit family. NDH-1 is composed of 14 different subunits. Subunits NuoB, C, D, E, F, and G constitute the peripheral sector of the complex.

The protein localises to the cell inner membrane. It carries out the reaction a quinone + NADH + 5 H(+)(in) = a quinol + NAD(+) + 4 H(+)(out). In terms of biological role, NDH-1 shuttles electrons from NADH, via FMN and iron-sulfur (Fe-S) centers, to quinones in the respiratory chain. The immediate electron acceptor for the enzyme in this species is believed to be ubiquinone. Couples the redox reaction to proton translocation (for every two electrons transferred, four hydrogen ions are translocated across the cytoplasmic membrane), and thus conserves the redox energy in a proton gradient. In Bartonella tribocorum (strain CIP 105476 / IBS 506), this protein is NADH-quinone oxidoreductase subunit C.